The chain runs to 374 residues: Putative F-box/kelch-repeat protein At4g39756 (374 aa).

An F-box domain is found at 17 to 63 (CPSFLSLPEEILVNCLARIPKSYYPKLSLVCKSFCSLILSMELYVER). Kelch repeat units follow at residues 135–180 (ELYA…VING), 181–227 (KIYV…GMAV), 231–278 (KIYV…RQSC), and 280–308 (WYDTKHKEWRDIKGLATLNRRRRSSILEV).

The protein is Putative F-box/kelch-repeat protein At4g39756 of Arabidopsis thaliana (Mouse-ear cress).